The chain runs to 475 residues: MEGLLTRCRTLSALATCSLRHSRCIVRKCYHCAPGRGQRLVVSRMFQPQNLREDQVLSLEGRASDLTCKSQRLMLQVGLILPASPGCYHLMPYTVRAVEKLVRVIDQEMQAIGGQKINMPSLSPAELWRATGRWDLMGRELLRLKDRHGKEYCLGPTHEEAVTALVASQKKLSYKQLPLLLYQVTRKFRDEPRPRFGLLRGREFYMKDMYTFDSSSEAAQETYSLVCDAYCRLFDRLGLRWMKARADVGSIGGTMSHEFQLPVDIGEDRLVVCPSCHFSANTEIVDLSQKICPDCQGPLTETKGIEVGHTFYLGTKYSSIFNAHFTNAHGESLLAEMGCYGLGVTRILAAAIEVLSTEDCIRWPSLLAPYQVCIIPPKKGSKEAAATEIVERLYDDVTEALPQLRGEVLLDDRTHLTIGNRLKDANKLGYPFVIIASKRALEDPAHFEVWSQNTGEVVFLTKEGVMELLTGVHVV.

The transit peptide at 1–29 (MEGLLTRCRTLSALATCSLRHSRCIVRKC) directs the protein to the mitochondrion.

It belongs to the class-II aminoacyl-tRNA synthetase family.

It localises to the mitochondrion matrix. The enzyme catalyses tRNA(Pro) + L-proline + ATP = L-prolyl-tRNA(Pro) + AMP + diphosphate. In terms of biological role, mitochondrial aminoacyl-tRNA synthetase that catalyzes the specific attachment of the proline amino acid (aa) to the homologous transfer RNA (tRNA), further participating in protein synthesis. The reaction occurs in a two steps: proline is first activated by ATP to form Pro-AMP and then transferred to the acceptor end of tRNA(Pro). The chain is Probable proline--tRNA ligase, mitochondrial (Pars2) from Rattus norvegicus (Rat).